A 275-amino-acid polypeptide reads, in one-letter code: MRGEASRIADRVSRDSLAPKLRDSGEDAWRIGNELFTITNVLDHNIQLERALTDPSRPVEDKVAVVKTLIGDEAHPLTMEIMSDLVARRWSRVSDIANAAEDFGVDGMMYYADHTNATLQVSIELAQLHSALLNLPVVRSKLYDATVPAEARIKLLYSLIGNADFNVVTKRLAEHATCNLRNRRYLQTIQWLINKFSRHMGESMVTVTTATPLSKEQVKKLVAIYSAKTGHPVHINSVVDPTVLGGMRIQVGDEVTDNTVVAQLQHLQRTVKATA.

Belongs to the ATPase delta chain family. In terms of assembly, F-type ATPases have 2 components, F(1) - the catalytic core - and F(0) - the membrane proton channel. F(1) has five subunits: alpha(3), beta(3), gamma(1), delta(1), epsilon(1). F(0) has three main subunits: a(1), b(2) and c(10-14). The alpha and beta chains form an alternating ring which encloses part of the gamma chain. F(1) is attached to F(0) by a central stalk formed by the gamma and epsilon chains, while a peripheral stalk is formed by the delta and b chains.

It localises to the cell membrane. F(1)F(0) ATP synthase produces ATP from ADP in the presence of a proton or sodium gradient. F-type ATPases consist of two structural domains, F(1) containing the extramembraneous catalytic core and F(0) containing the membrane proton channel, linked together by a central stalk and a peripheral stalk. During catalysis, ATP synthesis in the catalytic domain of F(1) is coupled via a rotary mechanism of the central stalk subunits to proton translocation. Functionally, this protein is part of the stalk that links CF(0) to CF(1). It either transmits conformational changes from CF(0) to CF(1) or is implicated in proton conduction. The chain is ATP synthase subunit delta from Bifidobacterium adolescentis (strain ATCC 15703 / DSM 20083 / NCTC 11814 / E194a).